The sequence spans 361 residues: Serpentine receptor class epsilon-32 (361 aa).

The next 7 helical transmembrane spans lie at 34–54, 66–86, 124–144, 168–188, 195–215, 256–276, and 286–306; these read IIEL…LYVM, ILYI…LITI, LLIF…YGIL, IPIA…LSVL, FLSH…YLFI, LVFV…ALAF, and FVEN…MLTI.

It belongs to the nematode receptor-like protein sre family.

It localises to the membrane. This is Serpentine receptor class epsilon-32 (sre-32) from Caenorhabditis elegans.